The chain runs to 93 residues: Early E3A 10.5 kDa glycoprotein (93 aa).

Asn-3 carries N-linked (GlcNAc...) asparagine; by host glycosylation. A helical membrane pass occupies residues 34 to 55 (MWWFSIALMFVCLIIMWLICCL).

Belongs to the adenoviridae E3A-1 family. In terms of processing, N-glycosylated and probably also O-glycosylated.

It localises to the host nucleus membrane. The polypeptide is Early E3A 10.5 kDa glycoprotein (Homo sapiens (Human)).